Here is a 355-residue protein sequence, read N- to C-terminus: UDP-N-acetylglucosamine--N-acetylmuramyl-(pentapeptide) pyrophosphoryl-undecaprenol N-acetylglucosamine transferase (355 aa).

UDP-N-acetyl-alpha-D-glucosamine contacts are provided by residues 7–9 (TGG), asparagine 119, arginine 159, serine 187, isoleucine 241, and glutamine 286.

Belongs to the glycosyltransferase 28 family. MurG subfamily.

It localises to the cell inner membrane. It catalyses the reaction di-trans,octa-cis-undecaprenyl diphospho-N-acetyl-alpha-D-muramoyl-L-alanyl-D-glutamyl-meso-2,6-diaminopimeloyl-D-alanyl-D-alanine + UDP-N-acetyl-alpha-D-glucosamine = di-trans,octa-cis-undecaprenyl diphospho-[N-acetyl-alpha-D-glucosaminyl-(1-&gt;4)]-N-acetyl-alpha-D-muramoyl-L-alanyl-D-glutamyl-meso-2,6-diaminopimeloyl-D-alanyl-D-alanine + UDP + H(+). The protein operates within cell wall biogenesis; peptidoglycan biosynthesis. In terms of biological role, cell wall formation. Catalyzes the transfer of a GlcNAc subunit on undecaprenyl-pyrophosphoryl-MurNAc-pentapeptide (lipid intermediate I) to form undecaprenyl-pyrophosphoryl-MurNAc-(pentapeptide)GlcNAc (lipid intermediate II). The chain is UDP-N-acetylglucosamine--N-acetylmuramyl-(pentapeptide) pyrophosphoryl-undecaprenol N-acetylglucosamine transferase from Nitrosomonas eutropha (strain DSM 101675 / C91 / Nm57).